The chain runs to 100 residues: Urease subunit gamma (100 aa).

Belongs to the urease gamma subunit family. As to quaternary structure, heterotrimer of UreA (gamma), UreB (beta) and UreC (alpha) subunits. Three heterotrimers associate to form the active enzyme.

It localises to the cytoplasm. It catalyses the reaction urea + 2 H2O + H(+) = hydrogencarbonate + 2 NH4(+). The protein operates within nitrogen metabolism; urea degradation; CO(2) and NH(3) from urea (urease route): step 1/1. The polypeptide is Urease subunit gamma (Cyanothece sp. (strain PCC 7425 / ATCC 29141)).